Consider the following 94-residue polypeptide: Large ribosomal subunit protein eL14 (94 aa).

The protein belongs to the eukaryotic ribosomal protein eL14 family.

This Methanopyrus kandleri (strain AV19 / DSM 6324 / JCM 9639 / NBRC 100938) protein is Large ribosomal subunit protein eL14.